Here is a 397-residue protein sequence, read N- to C-terminus: Ribosomal RNA large subunit methyltransferase I (397 aa).

One can recognise a PUA domain in the interval 2 to 80 (SAAIYLVKGR…QDVNRAFFVK (79 aa)).

This sequence belongs to the methyltransferase superfamily. RlmI family.

It is found in the cytoplasm. It carries out the reaction cytidine(1962) in 23S rRNA + S-adenosyl-L-methionine = 5-methylcytidine(1962) in 23S rRNA + S-adenosyl-L-homocysteine + H(+). Its function is as follows. Specifically methylates the cytosine at position 1962 (m5C1962) of 23S rRNA. The polypeptide is Ribosomal RNA large subunit methyltransferase I (Vibrio vulnificus (strain YJ016)).